The sequence spans 507 residues: Ribonuclease Y (507 aa).

A helical transmembrane segment spans residues 1–21 (MLWYIVAGAGGLLIGYLIASY). A KH domain is found at 197-282 (TVSTVSLPSD…EMYEKAKQEV (86 aa)). The HD domain maps to 323–416 (VLNHSIEVAL…VAAADALSAA (94 aa)).

This sequence belongs to the RNase Y family.

The protein resides in the cell membrane. In terms of biological role, endoribonuclease that initiates mRNA decay. This is Ribonuclease Y from Thermotoga petrophila (strain ATCC BAA-488 / DSM 13995 / JCM 10881 / RKU-1).